The chain runs to 477 residues: E3 ubiquitin-protein ligase TRIM17 (477 aa).

The RING-type zinc finger occupies 16–66 (CSICLDYFTDPVMTACGHNFCRECIQMSWEKGKGKKGKKKQKGSFPCPECR). Residues 94–135 (HKRDLCQIHQEPLKLFCQDDQTPICVVCREAQEHRMHRVLPL) form a B box-type zinc finger. 4 residues coordinate Zn(2+): C99, H102, C121, and H127. Positions 135–225 (LDEAAREYKL…GKLQDSKASL (91 aa)) form a coiled coil. The B30.2/SPRY domain occupies 276–475 (AIKTVCRVPG…MVISTVTMWV (200 aa)).

It belongs to the TRIM/RBCC family. As to quaternary structure, interacts (via coiled coil) with TRIM44 (via coiled coil). Interacts with TRIM28; this interaction prevents TRIM28 activity on BCL2A1. Interacts with TRIM41; this interaction prevents TRIM41 activity on ZSCAN2. Interacts with BECN1. Interacts with NFATC3 and NFATC4; these interactions prevent NFATC3 and NFATC4 nuclear localization. In terms of processing, auto-ubiquitinated. Expressed almost exclusively in the testis.

It localises to the cytoplasm. It is found in the lysosome. The catalysed reaction is S-ubiquitinyl-[E2 ubiquitin-conjugating enzyme]-L-cysteine + [acceptor protein]-L-lysine = [E2 ubiquitin-conjugating enzyme]-L-cysteine + N(6)-ubiquitinyl-[acceptor protein]-L-lysine.. The protein operates within protein modification; protein ubiquitination. E3 ubiquitin ligase that plays important roles in the regulation of neuronal apoptosis, selective autophagy or cell proliferation. Stimulates the degradation of kinetochore ZW10 interacting protein ZWINT in a proteasome-dependent manner, leading to negative regulation of cell proliferation. Inhibits autophagic degradation of diverse known targets while contributing to autophagy of midbodies. Autophagy-inhibitory activity involves MCL1, which TRIM17 assembles into complexes with the key autophagy regulator BECN1. Controls neuronal apoptosis by mediating ubiquitination and degradation of MCL1 to initiate neuronal death. In addition, regulates NFAT transcription factors NFATC3 and NFATC4 activities by preventing their nuclear localization, thus inhibiting their transcriptional activities. Decreases TRIM41-mediated degradation of ZSCAN2 thereby stimulating alpha-synuclein/SNCA transcription in neuronal cells. Prevents the E3 ubiquitin-ligase activity of TRIM28 and its interaction with anti-apoptotic BCL2A1, blocking TRIM28 from ubiquitinating BCL2A1. This chain is E3 ubiquitin-protein ligase TRIM17 (Trim17), found in Rattus norvegicus (Rat).